Consider the following 1355-residue polypeptide: MNDDRETPPKRKPGEDDTLFDIDFLDDTTSHSGSRSKVTNSHANANYIPPSHVLPEETIDLDADDDNIENDVHENLFMSNNHDDQTSWNANRFDSDAYQPQSLRAVKPPGLFARFGNGLKNAFTFKRKKGPESFEMNHYNAVTNNELDDNYLDSRNKFNIKILFNRYILRKNVGDAEGNGEPRVIHINDSLANSSFGYSDNHISTTKYNFATFLPKFLFQEFSKYANLFFLCTSAIQQVPHVSPTNRYTTIGTLLVVLIVSAMKECIEDIKRANSDKELNNSTAEIFSEAHDDFVEKRWIDIRVGDIIRVKSEEPIPADTIILSSSEPEGLCYIETANLDGETNLKIKQSRVETAKFIDVKTLKNMNGKVVSEQPNSSLYTYEGTMTLNDRQIPLSPDQMILRGATLRNTAWIFGLVIFTGHETKLLRNATATPIKRTAVEKIINRQIIALFTVLIVLILISSIGNVIMSTADAKHLSYLYLEGTNKAGLFFKDFLTFWILFSNLVPISLFVTVELIKYYQAFMIGSDLDLYYEKTDTPTVVRTSSLVEELGQIEYIFSDKTGTLTRNIMEFKSCSIAGHCYIDKIPEDKTATVEDGIEVGYRKFDDLKKKLNDPSDEDSPIINDFLTLLATCHTVIPEFQSDGSIKYQAASPDEGALVQGGADLGYKFIIRKPNSVTVLLEETGEEKEYQLLNICEFNSTRKRMSAIFRFPDGSIKLFCKGADTVILERLDDEANQYVEATMRHLEDYASEGLRTLCLAMRDISEGEYEEWNSIYNEAATTLDNRAEKLDEAANLIEKNLILIGATAIEDKLQDGVPETIHTLQEAGIKIWVLTGDRQETAINIGMSCRLLSEDMNLLIINEETRDDTERNLLEKINALNEHQLSTHDMNTLALVIDGKSLGFALEPELEDYLLTVAKLCKAVICCRVSPLQKALVVKMVKRKSSSLLLAIGDGANDVSMIQAAHVGVGISGMEGMQAARSADIAVGQFKFLKKLLLVHGSWSYQRISVAILYSFYKNTALYMTQFWYVFANAFSGQSIMESWTMSFYNLFFTVWPPFVIGVFDQFVSSRLLERYPQLYKLGQKGQFFSVYIFWGWIINGFFHSAIVFIGTILIYRYGFALNMHGELADHWSWGVTVYTTSVIIVLGKAALVTNQWTKFTLIAIPGSLLFWLIFFPIYASIFPHANISREYYGVVKHTYGSGVFWLTLIVLPIFALVRDFLWKYYKRMYEPETYHVIQEMQKYNISDSRPHVQQFQNAIRKVRQVQRMKKQRGFAFSQAEEGGQEKIVRMYDTTQKRGKYGELQDASANPFNDNNGLGSNDFESAEPFIENPFADGNQNSNRFSSSRDDISFDI.

The span at 1–15 (MNDDRETPPKRKPGE) shows a compositional bias: basic and acidic residues. Residues 1–50 (MNDDRETPPKRKPGEDDTLFDIDFLDDTTSHSGSRSKVTNSHANANYIPP) are disordered. The involved in autoinhibition stretch occupies residues 1 to 104 (MNDDRETPPK…SDAYQPQSLR (104 aa)). At 1-221 (MNDDRETPPK…TFLPKFLFQE (221 aa)) the chain is on the cytoplasmic side. Residues 16 to 26 (DDTLFDIDFLD) are compositionally biased toward acidic residues. Residues 30–44 (SHSGSRSKVTNSHAN) are compositionally biased toward polar residues. At serine 102 the chain carries Phosphoserine. The chain crosses the membrane as a helical span at residues 222–242 (FSKYANLFFLCTSAIQQVPHV). The involved in phosphatidylserine substrate recognition stretch occupies residues 237–238 (QQ). Topologically, residues 243 to 246 (SPTN) are lumenal. A helical transmembrane segment spans residues 247 to 267 (RYTTIGTLLVVLIVSAMKECI). The Cytoplasmic segment spans residues 268–449 (EDIKRANSDK…VEKIINRQII (182 aa)). Residues 450–470 (ALFTVLIVLILISSIGNVIMS) form a helical membrane-spanning segment. Topologically, residues 471–490 (TADAKHLSYLYLEGTNKAGL) are lumenal. Residues 491–511 (FFKDFLTFWILFSNLVPISLF) traverse the membrane as a helical segment. Residues 512–1012 (VTVELIKYYQ…WSYQRISVAI (501 aa)) lie on the Cytoplasmic side of the membrane. Aspartate 560 (4-aspartylphosphate intermediate) is an active-site residue. Residues aspartate 560, lysine 561, threonine 562, glutamate 655, phenylalanine 698, serine 700, lysine 703, lysine 721, arginine 755, threonine 756, threonine 835, glycine 836, aspartate 837, arginine 928, and lysine 934 each coordinate ATP. Aspartate 560 lines the Mg(2+) pocket. Threonine 562 lines the Mg(2+) pocket. Position 954 (aspartate 954) interacts with Mg(2+). Residues asparagine 957 and aspartate 958 each coordinate ATP. Aspartate 958 provides a ligand contact to Mg(2+). The chain crosses the membrane as a helical span at residues 1013-1033 (LYSFYKNTALYMTQFWYVFAN). The Lumenal portion of the chain corresponds to 1034–1043 (AFSGQSIMES). The helical transmembrane segment at 1044–1064 (WTMSFYNLFFTVWPPFVIGVF) threads the bilayer. Over 1065-1094 (DQFVSSRLLERYPQLYKLGQKGQFFSVYIF) the chain is Cytoplasmic. Residues 1095 to 1115 (WGWIINGFFHSAIVFIGTILI) traverse the membrane as a helical segment. The Lumenal segment spans residues 1116-1131 (YRYGFALNMHGELADH). The chain crosses the membrane as a helical span at residues 1132 to 1152 (WSWGVTVYTTSVIIVLGKAAL). Lysine 1149 is a binding site for a 1,2-diacyl-sn-glycero-3-phospho-(1D-myo-inositol 4-phosphate). Over 1153–1161 (VTNQWTKFT) the chain is Cytoplasmic. Residues 1162–1182 (LIAIPGSLLFWLIFFPIYASI) form a helical membrane-spanning segment. The Lumenal segment spans residues 1183 to 1202 (FPHANISREYYGVVKHTYGS). A helical membrane pass occupies residues 1203–1223 (GVFWLTLIVLPIFALVRDFLW). A 1,2-diacyl-sn-glycero-3-phospho-(1D-myo-inositol 4-phosphate)-binding residues include arginine 1219, tryptophan 1223, lysine 1224, tyrosine 1235, and histidine 1236. Residues 1224 to 1355 (KYYKRMYEPE…SSRDDISFDI (132 aa)) lie on the Cytoplasmic side of the membrane. An interaction with GEA2 region spans residues 1230-1282 (YEPETYHVIQEMQKYNISDSRPHVQQFQNAIRKVRQVQRMKKQRGFAFSQAEE). An involved in autoinhibition region spans residues 1231 to 1309 (EPETYHVIQE…KYGELQDASA (79 aa)). Residues 1305 to 1355 (QDASANPFNDNNGLGSNDFESAEPFIENPFADGNQNSNRFSSSRDDISFDI) are disordered. Residues 1307-1323 (ASANPFNDNNGLGSNDF) show a composition bias toward polar residues. The segment covering 1346–1355 (SSRDDISFDI) has biased composition (basic and acidic residues).

This sequence belongs to the cation transport ATPase (P-type) (TC 3.A.3) family. Type IV subfamily. As to quaternary structure, component of a flippase complex consisting of DRS2 and CDC50. Interacts with CDC50; the interaction is direct, is required for their mutual export from the endoplasmic reticulum, and preferentially occurs when DRS2 is in the E2P state. Interacts (via C-terminus) with GEA2 (via SEC7 domain); the interaction is direct. Interacts with GEA1. Mg(2+) is required as a cofactor.

Its subcellular location is the golgi apparatus. The protein resides in the trans-Golgi network membrane. It localises to the endosome membrane. The catalysed reaction is ATP + H2O + phospholipidSide 1 = ADP + phosphate + phospholipidSide 2.. It catalyses the reaction a 1,2-diacyl-sn-glycero-3-phospho-L-serine(out) + ATP + H2O = a 1,2-diacyl-sn-glycero-3-phospho-L-serine(in) + ADP + phosphate + H(+). It carries out the reaction a 1,2-diacyl-sn-glycero-3-phosphoethanolamine(out) + ATP + H2O = a 1,2-diacyl-sn-glycero-3-phosphoethanolamine(in) + ADP + phosphate + H(+). Its activity is regulated as follows. Allosterically activated by binding 1,2-diacyl-sn-glycero-3-phospho-(1D-myo-inositol 4-phosphate) (phosphatidylinositol 4-phosphate). Inhibited by orthovanadate, N-ethylmaleimide, trifluoroberyllate and tetrafluoroaluminate; orthovanadate and N-ethylmaleimide inhibit phosphorylation of the active site aspartic acid. The ATPase activity is not potently stimulated by phosphatidylinositol 3-phosphate and phosphatidylinositol 5-phosphate, phosphatidylinositol 4,5-bisphosphate or phosphatidylcholine. Not inhibited by azide. Functionally, catalytic component of a P4-ATPase flippase complex which catalyzes the hydrolysis of ATP coupled to the transport of phosphatidylserine and small amounts of ethanolamine from the lumen to the cytosolic leaflet of the trans-Golgi network and ensures the maintenance of asymmetric distribution of phospholipids. Contributes to clathrin-coated vesicle formation, endocytosis, and protein trafficking between the Golgi and endosomal system. Does not appear to transport phosphatidylcholine or sphingomyelin. The polypeptide is Phospholipid-transporting ATPase DRS2 (Saccharomyces cerevisiae (strain ATCC 204508 / S288c) (Baker's yeast)).